The chain runs to 179 residues: Probable splicing factor, arginine/serine-rich 6 (179 aa).

One can recognise an RRM domain in the interval 3–76 (AKVYVGGLPS…VRARVELSTG (74 aa)). The disordered stretch occupies residues 75-179 (TGQRRGGGGR…RSRSRSASPH (105 aa)). Gly residues predominate over residues 78–93 (RRGGGGRGGGFGGRGG). Over residues 94–160 (GGRDRSPYRG…RSPQERDRSH (67 aa)) the composition is skewed to basic and acidic residues. Positions 161 to 173 (SKSRSRSRSRSRS) are enriched in basic residues.

This sequence belongs to the splicing factor SR family. In terms of processing, extensively phosphorylated on serine residues in the RS domain.

The protein localises to the nucleus. Functionally, plays a functionally redundant role in shifting germ cell sexual differentiation in hermaprodites. Required for the development of somatic gonad structures and for progression from larval stage to adulthood. The polypeptide is Probable splicing factor, arginine/serine-rich 6 (rsp-6) (Caenorhabditis elegans).